Here is a 315-residue protein sequence, read N- to C-terminus: MPFCQVVVGPPGSGKSTYCFGMYQLLSAIGRSSIIVNLDPANDFIKYPCAIDIRKVLDVEMIQKDYDLGPNGALIYAMEAIEYHVEWLLKELKKHRDSYVIFDCPGQVELFTNHNSLQKIIKTLEKELDYRPVSVQLVDAYCCTNPSAYVSALLVCLKGMLQLDMPHVNILSKADLLCTYGTLPMKLDFFTEVQDLSYLAPLLDRDKRLQRYSDLNKAICELVEDFNLVSFEVVAVENKASMLRVLRKIDQAGGYAYGSTEIGGDAVWVNAVRQGGDPLQGISPQERWIDKKEEYDKYEWELEQKSTMDEDENEG.

12–17 (GSGKST) is a binding site for GTP. Positions 69 to 71 (GPN) match the Gly-Pro-Asn (GPN)-loop; involved in dimer interface motif. 172–175 (SKAD) lines the GTP pocket.

Belongs to the GPN-loop GTPase family. In terms of assembly, heterodimers with gpn1 or fet5/gpn3. Binds to RNA polymerase II (RNAPII).

It localises to the cytoplasm. The protein resides in the nucleus. Its function is as follows. Small GTPase required for proper nuclear import of RNA polymerase II and III (RNAPII and RNAPIII). May act at an RNAP assembly step prior to nuclear import. In Schizosaccharomyces pombe (strain 972 / ATCC 24843) (Fission yeast), this protein is GPN-loop GTPase 2.